A 389-amino-acid chain; its full sequence is Oxysterol-binding protein 1 (389 aa).

2 coiled-coil regions span residues 1–31 and 340–371; these read MGKKDKNVSVEEEVDEAEIEKLAAENANKPA and KDDVKGMSQEKVKVEEEQRKLAHHRKNADEWK. The segment at 1-43 is disordered; the sequence is MGKKDKNVSVEEEVDEAEIEKLAAENANKPAPQLTKEDLDAMD.

This sequence belongs to the OSBP family. Interacts with dstC.

Its subcellular location is the cytoplasm. Its function is as follows. May play a role in the regulation of the slug-fruiting body switch. The chain is Oxysterol-binding protein 1 (osbA) from Dictyostelium discoideum (Social amoeba).